Reading from the N-terminus, the 225-residue chain is Esterase OVCA2 (225 aa).

Catalysis depends on charge relay system residues Ser119, Asp177, and His204.

This sequence belongs to the LovG family. Strongly expressed in kidney and liver. Moderately expressed in brain, skin and testis. Weakly expressed in heart, lung, small intestine, spleen, stomach and thymus.

The catalysed reaction is a carboxylic ester + H2O = an alcohol + a carboxylate + H(+). In terms of biological role, exhibits ester hydrolase activity with a strong preference for long-chain alkyl ester substrates and high selectivity against a variety of short, branched, and substituted esters. Is able to hydrolyze ester bonds within a wide range of p-nitrophenyl derivatives (C2-C14) in vitro, with a strong preference toward substrates of &gt;8 carbons. In Mus musculus (Mouse), this protein is Esterase OVCA2 (Ovca2).